Here is a 53-residue protein sequence, read N- to C-terminus: IgW transmembrane form Tm1T3/Tm6T3/Tm3C4 (53 aa).

A disordered region spans residues 1–25; sequence VQAVPPDVKGEEGKEEVEDMDGDDN. Acidic residues predominate over residues 13–24; sequence GKEEVEDMDGDD. The helical transmembrane segment at 29 to 49 threads the bilayer; that stretch reads VAAFAILFILSFLYSTFVTVV.

As to expression, expressed in the spleen, pancreas, peripheral blood lymphocytes and at low levels in the epigonal organ.

The protein resides in the membrane. The sequence is that of IgW transmembrane form Tm1T3/Tm6T3/Tm3C4 from Ginglymostoma cirratum (Nurse shark).